Reading from the N-terminus, the 204-residue chain is Probable molybdenum cofactor guanylyltransferase (204 aa).

Residues 10-12, Lys22, Asp75, and Asp104 contribute to the GTP site; that span reads LSG. Position 104 (Asp104) interacts with Mg(2+).

The protein belongs to the MobA family. It depends on Mg(2+) as a cofactor.

The protein resides in the cytoplasm. The enzyme catalyses Mo-molybdopterin + GTP + H(+) = Mo-molybdopterin guanine dinucleotide + diphosphate. Functionally, transfers a GMP moiety from GTP to Mo-molybdopterin (Mo-MPT) cofactor (Moco or molybdenum cofactor) to form Mo-molybdopterin guanine dinucleotide (Mo-MGD) cofactor. This is Probable molybdenum cofactor guanylyltransferase from Methanocaldococcus jannaschii (strain ATCC 43067 / DSM 2661 / JAL-1 / JCM 10045 / NBRC 100440) (Methanococcus jannaschii).